We begin with the raw amino-acid sequence, 361 residues long: tRNA/tmRNA (uracil-C(5))-methyltransferase (361 aa).

S-adenosyl-L-methionine contacts are provided by Gln-183, Tyr-211, Asn-216, Glu-232, and Asp-294. Catalysis depends on Cys-319, which acts as the Nucleophile. Glu-353 (proton acceptor) is an active-site residue.

This sequence belongs to the class I-like SAM-binding methyltransferase superfamily. RNA M5U methyltransferase family. TrmA subfamily.

The catalysed reaction is uridine(54) in tRNA + S-adenosyl-L-methionine = 5-methyluridine(54) in tRNA + S-adenosyl-L-homocysteine + H(+). It catalyses the reaction uridine(341) in tmRNA + S-adenosyl-L-methionine = 5-methyluridine(341) in tmRNA + S-adenosyl-L-homocysteine + H(+). Its function is as follows. Dual-specificity methyltransferase that catalyzes the formation of 5-methyluridine at position 54 (m5U54) in all tRNAs, and that of position 341 (m5U341) in tmRNA (transfer-mRNA). The polypeptide is tRNA/tmRNA (uracil-C(5))-methyltransferase (Acinetobacter baylyi (strain ATCC 33305 / BD413 / ADP1)).